Here is a 914-residue protein sequence, read N- to C-terminus: Isoleucine--tRNA ligase (914 aa).

The 'HIGH' region motif lies at 64–74 (PYANGNFHLGH). Residue E557 coordinates L-isoleucyl-5'-AMP. Residues 598-602 (AMSKS) carry the 'KMSKS' region motif. K601 contacts ATP. Residues C889, C892, C906, and C909 each contribute to the Zn(2+) site.

Belongs to the class-I aminoacyl-tRNA synthetase family. IleS type 1 subfamily. As to quaternary structure, monomer. The cofactor is Zn(2+).

The protein localises to the cytoplasm. The catalysed reaction is tRNA(Ile) + L-isoleucine + ATP = L-isoleucyl-tRNA(Ile) + AMP + diphosphate. Functionally, catalyzes the attachment of isoleucine to tRNA(Ile). As IleRS can inadvertently accommodate and process structurally similar amino acids such as valine, to avoid such errors it has two additional distinct tRNA(Ile)-dependent editing activities. One activity is designated as 'pretransfer' editing and involves the hydrolysis of activated Val-AMP. The other activity is designated 'posttransfer' editing and involves deacylation of mischarged Val-tRNA(Ile). The polypeptide is Isoleucine--tRNA ligase (Leptospira borgpetersenii serovar Hardjo-bovis (strain JB197)).